A 225-amino-acid polypeptide reads, in one-letter code: NAD(P)H-quinone oxidoreductase subunit K, chloroplastic (225 aa).

[4Fe-4S] cluster-binding residues include Cys-43, Cys-44, Cys-108, and Cys-139.

Belongs to the complex I 20 kDa subunit family. NDH is composed of at least 16 different subunits, 5 of which are encoded in the nucleus. [4Fe-4S] cluster serves as cofactor.

It localises to the plastid. The protein resides in the chloroplast thylakoid membrane. It catalyses the reaction a plastoquinone + NADH + (n+1) H(+)(in) = a plastoquinol + NAD(+) + n H(+)(out). The enzyme catalyses a plastoquinone + NADPH + (n+1) H(+)(in) = a plastoquinol + NADP(+) + n H(+)(out). In terms of biological role, NDH shuttles electrons from NAD(P)H:plastoquinone, via FMN and iron-sulfur (Fe-S) centers, to quinones in the photosynthetic chain and possibly in a chloroplast respiratory chain. The immediate electron acceptor for the enzyme in this species is believed to be plastoquinone. Couples the redox reaction to proton translocation, and thus conserves the redox energy in a proton gradient. This Brachypodium distachyon (Purple false brome) protein is NAD(P)H-quinone oxidoreductase subunit K, chloroplastic.